A 245-amino-acid chain; its full sequence is Alanyl-tRNA editing protein AlaX-M (245 aa).

4 residues coordinate Zn(2+): His-107, His-111, Cys-210, and His-214.

This sequence belongs to the class-II aminoacyl-tRNA synthetase family. Editing domain AlaX-M subfamily. Zn(2+) serves as cofactor.

The protein resides in the cytoplasm. Functions in trans to edit the amino acid moiety from mischarged charged tRNA(Ala). The protein is Alanyl-tRNA editing protein AlaX-M (alaXM) of Methanosarcina acetivorans (strain ATCC 35395 / DSM 2834 / JCM 12185 / C2A).